Here is a 416-residue protein sequence, read N- to C-terminus: E3 ubiquitin-protein ligase makorin-2 (416 aa).

C3H1-type zinc fingers lie at residues 2–29 (STKQ…HDLA) and 31–58 (SKPS…HTKP). Residues 61 to 144 (AAGGAVGPAP…DPQTSPEMKP (84 aa)) form a disordered region. The span at 95–123 (HSNEPGKREKKTLVLRDRNLTGLAEDKTP) shows a compositional bias: basic and acidic residues. Serine 139 bears the Phosphoserine mark. The segment at 165 to 192 (SNEPQLCPYAAAGECRFGDACVYLHGDM) adopts a C3H1-type 3 zinc-finger fold. The segment at 193-222 (CEICRLQVLHPFDPEQRKAHEKMCMSTFEH) is makorin-type Cys-His. Residues 238 to 292 (CSICMEVILEKASASERRFGILSNCSHTYCLSCIRQWRCAKQFENPIIKSCPECR) form an RING-type zinc finger. The C3H1-type 4 zinc finger occupies 321 to 350 (GMGKKACKYFEQGKGTCPFGSKCLYRHAYP).

As to quaternary structure, interacts with PDLIM2 (via LIM zinc-binding domain). Interacts with RELA. Highly expressed in the testis, and lower expression in the brain, thymus, heart, lung, liver, spleen, kidney, ovary, uterus, and seminal vesicle (at protein level). Expressed in primary immune cells, such as CD4-positive and CD8-positive T cells, CD19-positive B cells and CD11c-positive dendritic cells, and in embryonic fibroblasts (at protein level).

It localises to the cytoplasm. The protein localises to the nucleus. The catalysed reaction is S-ubiquitinyl-[E2 ubiquitin-conjugating enzyme]-L-cysteine + [acceptor protein]-L-lysine = [E2 ubiquitin-conjugating enzyme]-L-cysteine + N(6)-ubiquitinyl-[acceptor protein]-L-lysine.. The protein operates within protein modification; protein ubiquitination. Its function is as follows. E3 ubiquitin ligase catalyzing the covalent attachment of ubiquitin moieties onto substrate proteins. Promotes the polyubiquitination and proteasome-dependent degradation of RELA/p65, thereby suppressing RELA-mediated NF-kappa-B transactivation and negatively regulating inflammatory responses. Plays a role in the regulation of spermiation and in male fertility. The polypeptide is E3 ubiquitin-protein ligase makorin-2 (Mkrn2) (Mus musculus (Mouse)).